The sequence spans 677 residues: MSSVDQKAISTIRLLAVDAVAAANSGHPGAPLGLAPAAHAVFKKMRFNPKDTKWINRDRFVLSNGHACALLYSMLVLYGYDLTVEDLKKFRQLGSKTPGHPENTDVPGAEVTTGPLGQGICNGVGIALAQAQFAATYNKPDFPISDSYTYVFLGDGCLMEGVSSEASSLAGHLQLGNLIAFWDDNKISIDGSTEVAFTEDVIARYKSYGWHIVEVSDADTDITAIAAAIDEAKKVTNKPTLVRLTTTIGFGSLAQGTHGVHGAPLKADDIKQLKTKWGFNPEESFAVPAEVTASYNEHVAENQKIQQQWNELFAAYKQKYPELGAELQRRLDGKLPENWDKALPVYTPADAAVATRKLSEIVLSKIIPEVPEIIGGSADLTPSNLTKAKGTVDFQPAATGLGDYSGRYIRYGVREHAMGAIMNGIAAFGANYKNYGGTFLNFVSYAAGAVRLSALSEFPITWVATHDSIGLGEDGPTHQPIETLAHFRATPNISVWRPADGNETSAAYKSAIESTHTPHILALTRQNLPQLEGSSIEKASKGGYTLVQQDKADIIIVATGSEVSLAVDALKVLEGQGIKAGVVSLPDQLTFDKQSEEYKLSVLPDGVPILSVEVMSTFGWSKYSHQQFGLNRFGASGKAPEIFKLFEFTPEGVAERAAKTVAFYKGKDVVSPLRSAF.

Substrate is bound at residue histidine 27. Thiamine diphosphate is bound by residues histidine 66 and 114–116 (GPL). Residue aspartate 155 coordinates Mg(2+). Glycine 156 and asparagine 185 together coordinate thiamine diphosphate. The Mg(2+) site is built by asparagine 185 and isoleucine 187. Residues histidine 261, arginine 356, and serine 383 each contribute to the substrate site. Position 261 (histidine 261) interacts with thiamine diphosphate. Thiamine diphosphate is bound by residues glutamate 415 and phenylalanine 442. The active-site Proton donor is the glutamate 415. Substrate-binding residues include histidine 466, aspartate 474, and arginine 525.

This sequence belongs to the transketolase family. Homodimer. Mg(2+) serves as cofactor. The cofactor is Ca(2+). Requires Mn(2+) as cofactor. It depends on Co(2+) as a cofactor. Thiamine diphosphate is required as a cofactor.

The catalysed reaction is D-sedoheptulose 7-phosphate + D-glyceraldehyde 3-phosphate = aldehydo-D-ribose 5-phosphate + D-xylulose 5-phosphate. In terms of biological role, catalyzes the transfer of a two-carbon ketol group from a ketose donor to an aldose acceptor, via a covalent intermediate with the cofactor thiamine pyrophosphate. This chain is Transketolase (TKT), found in Scheffersomyces stipitis (strain ATCC 58785 / CBS 6054 / NBRC 10063 / NRRL Y-11545) (Yeast).